Consider the following 300-residue polypeptide: Fe(3+) dicitrate-binding periplasmic protein FecB (300 aa).

The N-terminal stretch at Met1–Ala21 is a signal peptide. The region spanning Arg39 to Pro295 is the Fe/B12 periplasmic-binding domain.

It belongs to the bacterial solute-binding protein 8 family. In terms of assembly, the complex is composed of two ATP-binding proteins (FecE), two transmembrane proteins (FecC and FecD) and a solute-binding protein (FecB). Interacts with FecC and FecD.

It is found in the periplasm. Functionally, part of the ABC transporter complex FecBCDE involved in citrate-dependent Fe(3+) uptake. Binds both iron-free and iron-loaded citrate although it binds iron-loaded citrate with a higher affinity. Binds different forms of Fe(3+)-citrate as well as citrate complexed with various representative Fe(3+)-mimics (Ga(3+), Al(3+), Sc(3+) and In(3+)) and a representative divalent metal ion (Mg(2+)). Can also bind various tricarboxylates in iron-free and iron-loaded form. This Escherichia coli (strain K12) protein is Fe(3+) dicitrate-binding periplasmic protein FecB.